The chain runs to 192 residues: Elongation factor P (192 aa).

This sequence belongs to the elongation factor P family.

Its subcellular location is the cytoplasm. The protein operates within protein biosynthesis; polypeptide chain elongation. In terms of biological role, involved in peptide bond synthesis. Stimulates efficient translation and peptide-bond synthesis on native or reconstituted 70S ribosomes in vitro. Probably functions indirectly by altering the affinity of the ribosome for aminoacyl-tRNA, thus increasing their reactivity as acceptors for peptidyl transferase. This is Elongation factor P (efp) from Borreliella burgdorferi (strain ATCC 35210 / DSM 4680 / CIP 102532 / B31) (Borrelia burgdorferi).